The sequence spans 185 residues: CASP-like protein 2C3 (185 aa).

Residues 1–13 are Cytoplasmic-facing; that stretch reads MAAAARVSEVKAE. Residues 14-34 traverse the membrane as a helical segment; sequence GLLRGACAALAAAAALLVGLS. Residues 35–53 lie on the Extracellular side of the membrane; it reads TQTETVLLVRKKATVKDVQ. The helical transmembrane segment at 54–74 threads the bilayer; sequence ALWVLAMAAAAAAGYHLLQLL. Over 75–104 the chain is Cytoplasmic; it reads KCLYLGRVGGARPCRRSSRALAWTCLLLDK. Residues 105–125 form a helical membrane-spanning segment; the sequence is ACAYTTFATTVAAAQACVVAL. At 126 to 146 the chain is on the extracellular side; the sequence is DGAHAVQWTKLCNIYTRFCEQ. A helical transmembrane segment spans residues 147–167; the sequence is VAGSLVLGMLAAVGTAVLSAA. At 168 to 185 the chain is on the cytoplasmic side; that stretch reads SARNVFRHYSSLETYAAH.

It belongs to the Casparian strip membrane proteins (CASP) family. In terms of assembly, homodimer and heterodimers.

It is found in the cell membrane. The sequence is that of CASP-like protein 2C3 from Zea mays (Maize).